The chain runs to 570 residues: Glutamate--tRNA ligase (570 aa).

Positions 107–117 (PNPDFVLHLGS) match the 'HIGH' region motif.

This sequence belongs to the class-I aminoacyl-tRNA synthetase family. Glutamate--tRNA ligase type 2 subfamily.

It is found in the cytoplasm. It carries out the reaction tRNA(Glu) + L-glutamate + ATP = L-glutamyl-tRNA(Glu) + AMP + diphosphate. Functionally, catalyzes the attachment of glutamate to tRNA(Glu) in a two-step reaction: glutamate is first activated by ATP to form Glu-AMP and then transferred to the acceptor end of tRNA(Glu). In Pyrobaculum aerophilum (strain ATCC 51768 / DSM 7523 / JCM 9630 / CIP 104966 / NBRC 100827 / IM2), this protein is Glutamate--tRNA ligase.